A 104-amino-acid chain; its full sequence is uncharacterized protein (104 aa).

Disordered stretches follow at residues 1–20 (MTET…TTRK) and 83–104 (TASA…VAKK). The segment covering 83-93 (TASASSSGKKV) has biased composition (low complexity). A compositionally biased stretch (basic residues) spans 94–104 (VASKKKVVAKK).

This is an uncharacterized protein from Dictyostelium discoideum (Social amoeba).